The sequence spans 55 residues: UPF0391 membrane protein RALTA_A0099 (55 aa).

The next 2 membrane-spanning stretches (helical) occupy residues 5 to 25 (ALVF…GIAA) and 30 to 50 (IAKI…VMGL).

Belongs to the UPF0391 family.

The protein resides in the cell membrane. This is UPF0391 membrane protein RALTA_A0099 from Cupriavidus taiwanensis (strain DSM 17343 / BCRC 17206 / CCUG 44338 / CIP 107171 / LMG 19424 / R1) (Ralstonia taiwanensis (strain LMG 19424)).